Reading from the N-terminus, the 552-residue chain is Arginine--tRNA ligase (552 aa).

Residues 124-134 carry the 'HIGH' region motif; sequence GNPTGPLHLAH.

The protein belongs to the class-I aminoacyl-tRNA synthetase family. As to quaternary structure, monomer.

Its subcellular location is the cytoplasm. It catalyses the reaction tRNA(Arg) + L-arginine + ATP = L-arginyl-tRNA(Arg) + AMP + diphosphate. This is Arginine--tRNA ligase from Tropheryma whipplei (strain Twist) (Whipple's bacillus).